The sequence spans 107 residues: Phosphoribosyl-ATP pyrophosphatase (107 aa).

It belongs to the PRA-PH family.

Its subcellular location is the cytoplasm. The enzyme catalyses 1-(5-phospho-beta-D-ribosyl)-ATP + H2O = 1-(5-phospho-beta-D-ribosyl)-5'-AMP + diphosphate + H(+). The protein operates within amino-acid biosynthesis; L-histidine biosynthesis; L-histidine from 5-phospho-alpha-D-ribose 1-diphosphate: step 2/9. This is Phosphoribosyl-ATP pyrophosphatase from Bacillus cytotoxicus (strain DSM 22905 / CIP 110041 / 391-98 / NVH 391-98).